The sequence spans 1150 residues: MEKKAKESLRRYKKAARHSATHSSSSDSTSDSDSGSSSYSSTDSEQGVGGVGVGVGVPGGAGGPGGSGSVHGHPHTHGHGHHPRSAERHHRKKKSSRRGGSSSGDEPSSSRRKRDKRDHVQKKLVAKRNHIKRKLKEARLKKRAAAALSGHVHRSLSPTTRAKLKKLAERKRLRAASKEQRERDKLRVVQRDRERDHHRLGSSRSPPSSSTTTTTKIRIHQDIVGKRQKSPGLGSGLGGGSSSSSSRMHHQLMSREKIIIQTRARGRTPSLERERERERERERERERERHDLSLRERDRRDRERERAEREAARDKERAEALARCQERQRERERLAREKLRRQEEEEGGKRGGPGRDLDLPPYGSRERSLDTVERERERERSGRHVRDKRELDPYEREQEYLEERHGHGLIDEMRRYRRRDLSPMPEHYAPRLRDPRELYSEEERERAYKRAYLDARYSSREREAWLEARELRERELQGREYRDLETEDTLYPDERERLIRDRERDRERERDRERERNIGPRGDFRPEWEREWEEEGAGGGPGGPSGTPGRPGGFVGGPKRGKPPAHAGGGPPSQQQHHSASEPDWDADERERERERERDRERERDREDRPDTGGGGAGGDRPSIKNEPAWLEHDQREKPRGWQQQSSNSGGDWRDNDDAPPAPSHPHPASPHHHVHPRGERGSGRGFRRGGHGHGDHGERPGYRSHPPPLMTLPVQPPGGYSRGFPHKRLPYGSGRDGAALGARDGGLPGSSTFLKKHTHAPLVSPTQTPLLNPLLNAAKPNAAAQASAVAAATTAVAAAKAAAQSAANATTNPGILAQVSKLNTVCIKQEDASEDSAGTPELGAQDSPTQSLNLNQSLSSEGNPVKQELIRTSAVEGELSEISDSDDDILNKTDKVRPKNELPTETEQEMDTNADEVKSEALHIVAGHPIKGEEGDEVLDFEEISDGELEEDARHKGIGDALGVDWQGLIAETRQQASDAQAAQQGVDRGTSAKQRWQPYRVLLDLGISFGMAGEGYARCVMEEARQQLLQEKEQGQQRELDGDEEPPAKIPSPLLDYREFLASQQQLEPLACVQMGLRSAAVERQRLVGNVCGPGSRALSARQDLRLRRQLCGLPARECEFPRSVPIVGEGLRNLAMQMFQRRLLDVK.

The segment covering 1-10 (MEKKAKESLR) has biased composition (basic and acidic residues). 4 disordered regions span residues 1 to 444 (MEKK…EEER), 477 to 710 (QGRE…PPPL), 833 to 914 (ASED…MDTN), and 1034 to 1053 (KEQG…AKIP). Over residues 11–20 (RYKKAARHSA) the composition is skewed to basic residues. The span at 21-44 (THSSSSDSTSDSDSGSSSYSSTDS) shows a compositional bias: low complexity. Over residues 47–69 (GVGGVGVGVGVPGGAGGPGGSGS) the composition is skewed to gly residues. The span at 72-97 (GHPHTHGHGHHPRSAERHHRKKKSSR) shows a compositional bias: basic residues. The span at 98 to 107 (RGGSSSGDEP) shows a compositional bias: low complexity. Basic residues-rich tracts occupy residues 110–144 (SRRK…KKRA) and 162–175 (AKLK…RLRA). A coiled-coil region spans residues 122–147 (KKLVAKRNHIKRKLKEARLKKRAAAA). Basic and acidic residues predominate over residues 176–199 (ASKEQRERDKLRVVQRDRERDHHR). Positions 202–215 (SSRSPPSSSTTTTT) are enriched in low complexity. Residues 269-347 (PSLERERERE…KLRRQEEEEG (79 aa)) adopt a coiled-coil conformation. Composition is skewed to basic and acidic residues over residues 270-414 (SLER…DEMR), 428-444 (YAPR…EEER), and 492-529 (PDER…PEWE). The span at 537–558 (AGGGPGGPSGTPGRPGGFVGGP) shows a compositional bias: gly residues. Basic and acidic residues-rich tracts occupy residues 589 to 611 (ERER…DRPD) and 630 to 640 (WLEHDQREKPR). The segment covering 660–669 (PPAPSHPHPA) has biased composition (pro residues). The span at 693–702 (GHGDHGERPG) shows a compositional bias: basic and acidic residues. Low complexity predominate over residues 851–861 (QSLNLNQSLSS). A compositionally biased stretch (acidic residues) spans 879 to 889 (ELSEISDSDDD). Residues 890-903 (ILNKTDKVRPKNEL) are compositionally biased toward basic and acidic residues. A compositionally biased stretch (acidic residues) spans 905-914 (TETEQEMDTN).

It belongs to the ZC3H13 family. As to quaternary structure, component of the WMM complex, a N6-methyltransferase complex composed of a catalytic subcomplex, named MAC, and of an associated subcomplex, named MACOM. The MAC subcomplex is composed of Ime4/Mettl3 and Mettl14. The MACOM subcomplex is composed of fl(2)d, Flacc/Xio, Hakai, vir, and, in some cases of nito. In terms of tissue distribution, widely expressed during embryogenesis but shows enrichment in the neuroectoderm.

It localises to the nucleus. Functionally, associated component of the WMM complex, a complex that mediates N6-methyladenosine (m6A) methylation of mRNAs, a modification that plays a role in the efficiency of mRNA splicing and is required for sex determination. In the WMM complex, acts as a key regulator of m6A methylation by bridging fl(2)d to the RNA-binding component nito. Required for sex determination and dosage compensation via Sxl alternative splicing: m6A methylation acts as a key regulator of Sxl pre-mRNA and promotes female-specific alternative splicing of Sxl, which determines female physiognomy. This Drosophila melanogaster (Fruit fly) protein is Fl(2)d-associated complex component.